Reading from the N-terminus, the 206-residue chain is GTP cyclohydrolase 1 (206 aa).

Zn(2+) contacts are provided by Cys97, His100, and Cys168.

The protein belongs to the GTP cyclohydrolase I family. In terms of assembly, toroid-shaped homodecamer, composed of two pentamers of five dimers.

It catalyses the reaction GTP + H2O = 7,8-dihydroneopterin 3'-triphosphate + formate + H(+). The protein operates within cofactor biosynthesis; 7,8-dihydroneopterin triphosphate biosynthesis; 7,8-dihydroneopterin triphosphate from GTP: step 1/1. The polypeptide is GTP cyclohydrolase 1 (Chromobacterium violaceum (strain ATCC 12472 / DSM 30191 / JCM 1249 / CCUG 213 / NBRC 12614 / NCIMB 9131 / NCTC 9757 / MK)).